The following is a 200-amino-acid chain: MSITLESLSACLKNALGDALVQTIERLGELTLVVKPQAYAPAMLALRDHPDCRFEQLIDLCGVDYSGYGEGAWEGPRFAVVAHLLSVSKNARVRVRVFCPDDDLPAVASVVDIWPAASWFEREAFDLYGIVFEGHPDLRRILTDYGFIGHPFRKDFPLSGNVEMRYDPTQQRVIYQPVSIEPRDNVPRVVRDESYGDGRA.

It belongs to the complex I 30 kDa subunit family. NDH-1 is composed of 14 different subunits. Subunits NuoB, C, D, E, F, and G constitute the peripheral sector of the complex.

Its subcellular location is the cell inner membrane. It carries out the reaction a quinone + NADH + 5 H(+)(in) = a quinol + NAD(+) + 4 H(+)(out). Its function is as follows. NDH-1 shuttles electrons from NADH, via FMN and iron-sulfur (Fe-S) centers, to quinones in the respiratory chain. The immediate electron acceptor for the enzyme in this species is believed to be ubiquinone. Couples the redox reaction to proton translocation (for every two electrons transferred, four hydrogen ions are translocated across the cytoplasmic membrane), and thus conserves the redox energy in a proton gradient. The polypeptide is NADH-quinone oxidoreductase subunit C (Thiobacillus denitrificans (strain ATCC 25259 / T1)).